Here is a 357-residue protein sequence, read N- to C-terminus: D-amino-acid oxidase (357 aa).

FAD is bound by residues A13, G14, S42, G47, R289, G315, and G318. Residue R289 participates in D-proline binding. R289 is a binding site for D-serine.

Belongs to the DAMOX/DASOX family. FAD is required as a cofactor.

It is found in the cytoplasm. Its subcellular location is the secreted. It localises to the cell wall. It carries out the reaction a D-alpha-amino acid + O2 + H2O = a 2-oxocarboxylate + H2O2 + NH4(+). It catalyses the reaction D-phenylalanine + O2 + H2O = 3-phenylpyruvate + H2O2 + NH4(+). The enzyme catalyses D-lysine + O2 + H2O = 6-amino-2-oxohexanoate + H2O2 + NH4(+). The catalysed reaction is D-methionine + O2 + H2O = 4-methylsulfanyl-2-oxobutanoate + H2O2 + NH4(+). It carries out the reaction D-arginine + O2 + H2O = 5-guanidino-2-oxopentanoate + H2O2 + NH4(+). It catalyses the reaction D-ornithine + O2 + H2O = 5-amino-2-oxopentanoate + H2O2 + NH4(+). The enzyme catalyses D-leucine + O2 + H2O = 4-methyl-2-oxopentanoate + H2O2 + NH4(+). The catalysed reaction is D-histidine + O2 + H2O = 3-(imidazol-5-yl)pyruvate + H2O2 + NH4(+). Its activity is regulated as follows. Activated by manganese, copper, and iron ions. Inhibited by barium, aluminum, and zinc ions. Catalyzes the oxidative deamination of D-amino acids with broad substrate specificity. The protein is D-amino-acid oxidase of Unknown prokaryotic organism.